The following is a 415-amino-acid chain: Phosphoglycerate kinase (415 aa).

Substrate is bound by residues 27–29 (DIN), R44, 67–70 (HQGR), R124, and R164. Residues E336 and 362–365 (GGHM) contribute to the ATP site.

It belongs to the phosphoglycerate kinase family. As to quaternary structure, monomer.

It localises to the cytoplasm. It carries out the reaction (2R)-3-phosphoglycerate + ATP = (2R)-3-phospho-glyceroyl phosphate + ADP. The protein operates within carbohydrate degradation; glycolysis; pyruvate from D-glyceraldehyde 3-phosphate: step 2/5. The chain is Phosphoglycerate kinase from Sulfurisphaera tokodaii (strain DSM 16993 / JCM 10545 / NBRC 100140 / 7) (Sulfolobus tokodaii).